Here is a 492-residue protein sequence, read N- to C-terminus: Serine carboxypeptidase-like 31 (492 aa).

The first 30 residues, Met1–Cys30, serve as a signal peptide directing secretion. 3 disulfide bridges follow: Cys105-Cys376, Cys270-Cys283, and Cys307-Cys344. Asn156 carries an N-linked (GlcNAc...) asparagine glycan. The active site involves Ser198. 2 N-linked (GlcNAc...) asparagine glycosylation sites follow: Asn221 and Asn271. Asn372 and Asn383 each carry an N-linked (GlcNAc...) asparagine glycan. Active-site residues include Asp413 and His465.

It belongs to the peptidase S10 family. In terms of tissue distribution, expressed in roots, senescent leaves, stems, flowers and siliques.

The protein resides in the secreted. Probable carboxypeptidase. The chain is Serine carboxypeptidase-like 31 (SCPL31) from Arabidopsis thaliana (Mouse-ear cress).